The following is a 503-amino-acid chain: Glycerol kinase (503 aa).

Thr-14 contacts ADP. 3 residues coordinate ATP: Thr-14, Thr-15, and Ser-16. Sn-glycerol 3-phosphate is bound at residue Thr-14. Arg-18 serves as a coordination point for ADP. Positions 84, 85, 136, and 246 each coordinate sn-glycerol 3-phosphate. Glycerol contacts are provided by Arg-84, Glu-85, Tyr-136, Asp-246, and Gln-247. Positions 268 and 311 each coordinate ADP. ATP contacts are provided by Thr-268, Gly-311, Gln-315, and Gly-412. Gly-412 and Asn-416 together coordinate ADP.

The protein belongs to the FGGY kinase family. Homotetramer and homodimer (in equilibrium). Heterodimer with EIIA-Glc. Binds 1 zinc ion per glycerol kinase EIIA-Glc dimer. The zinc ion is important for dimerization.

It catalyses the reaction glycerol + ATP = sn-glycerol 3-phosphate + ADP + H(+). The protein operates within polyol metabolism; glycerol degradation via glycerol kinase pathway; sn-glycerol 3-phosphate from glycerol: step 1/1. With respect to regulation, activity of this regulatory enzyme is affected by several metabolites. Allosterically and non-competitively inhibited by fructose 1,6-bisphosphate (FBP) and unphosphorylated phosphocarrier protein EIIA-Glc (III-Glc), an integral component of the bacterial phosphotransferase (PTS) system. Key enzyme in the regulation of glycerol uptake and metabolism. Catalyzes the phosphorylation of glycerol to yield sn-glycerol 3-phosphate. The protein is Glycerol kinase of Klebsiella pneumoniae subsp. pneumoniae (strain ATCC 700721 / MGH 78578).